A 232-amino-acid chain; its full sequence is Aprataxin-like protein (232 aa).

An HIT domain is found at 38-160 (LKVYIESPES…MTLDHVSPSL (123 aa)). Interaction with DNA regions lie at residues 63 to 67 (DMFPK), 138 to 149 (HAGPSMNNLHLH), and 161 to 165 (KNSAH). Histidine 147 serves as the catalytic Nucleophile. The Zn(2+) site is built by cysteine 200 and cysteine 203. The segment at 209–212 (RHFT) is interaction with DNA. Zn(2+) is bound by residues histidine 217 and glutamate 221.

Monomer.

The protein resides in the nucleus. Its subcellular location is the cytoplasm. The catalysed reaction is a 5'-end adenosine-5'-diphospho-5'-2'-deoxyribonucleoside-DNA + H2O = a 5'-end 5'-phospho-2'-deoxyribonucleoside-DNA + AMP + 2 H(+). It carries out the reaction a 5'-end adenosine-5'-diphospho-5'-ribonucleoside-2'-deoxyribonucleotide-DNA + H2O = a 5'-end 5'-phospho-ribonucleoside-2'-deoxyribonucleotide-DNA + AMP + 2 H(+). The enzyme catalyses a 3'-end 2'-deoxyribonucleotide-3'-diphospho-5'-guanosine-DNA + H2O = a 3'-end 2'-deoxyribonucleotide 3'-phosphate-DNA + GMP + 2 H(+). Functionally, DNA-binding protein involved in single-strand DNA break repair, double-strand DNA break repair and base excision repair. Resolves abortive DNA ligation intermediates formed either at base excision sites, or when DNA ligases attempt to repair non-ligatable breaks induced by reactive oxygen species. Catalyzes the release of adenylate groups covalently linked to 5'-phosphate termini, resulting in the production of 5'-phosphate termini that can be efficiently rejoined. Likewise, catalyzes the release of 3'-linked guanosine (DNAppG) and inosine (DNAppI) from DNA, but has higher specific activity with 5'-linked adenosine (AppDNA). The sequence is that of Aprataxin-like protein (hnt3) from Schizosaccharomyces pombe (strain 972 / ATCC 24843) (Fission yeast).